Consider the following 530-residue polypeptide: UDP-N-acetylmuramoyl-L-alanyl-D-glutamate--2,6-diaminopimelate ligase (530 aa).

Leu52 contacts UDP-N-acetyl-alpha-D-muramoyl-L-alanyl-D-glutamate. Position 139–145 (139–145 (GTSGKTT)) interacts with ATP. UDP-N-acetyl-alpha-D-muramoyl-L-alanyl-D-glutamate-binding positions include 181–182 (TT), Ser208, and Arg216. Lys248 is modified (N6-carboxylysine). Meso-2,6-diaminopimelate contacts are provided by residues Arg410, 434-437 (DNPR), Gly488, and Glu492. Residues 434–437 (DNPR) carry the Meso-diaminopimelate recognition motif motif.

It belongs to the MurCDEF family. MurE subfamily. The cofactor is Mg(2+). In terms of processing, carboxylation is probably crucial for Mg(2+) binding and, consequently, for the gamma-phosphate positioning of ATP.

It is found in the cytoplasm. It catalyses the reaction UDP-N-acetyl-alpha-D-muramoyl-L-alanyl-D-glutamate + meso-2,6-diaminopimelate + ATP = UDP-N-acetyl-alpha-D-muramoyl-L-alanyl-gamma-D-glutamyl-meso-2,6-diaminopimelate + ADP + phosphate + H(+). Its pathway is cell wall biogenesis; peptidoglycan biosynthesis. Its function is as follows. Catalyzes the addition of meso-diaminopimelic acid to the nucleotide precursor UDP-N-acetylmuramoyl-L-alanyl-D-glutamate (UMAG) in the biosynthesis of bacterial cell-wall peptidoglycan. This Mycobacterium leprae (strain TN) protein is UDP-N-acetylmuramoyl-L-alanyl-D-glutamate--2,6-diaminopimelate ligase.